A 111-amino-acid polypeptide reads, in one-letter code: Cytochrome c3, 26 kDa (111 aa).

Residues histidine 30, histidine 33, cysteine 38, cysteine 41, histidine 42, histidine 43, cysteine 54, cysteine 59, histidine 60, histidine 77, cysteine 86, cysteine 89, histidine 90, cysteine 105, cysteine 108, and histidine 109 each coordinate heme c.

In terms of assembly, homodimer. Heme c is required as a cofactor.

The protein resides in the periplasm. Functionally, participates in sulfate respiration coupled with phosphorylation by transferring electrons from the enzyme dehydrogenase to ferredoxin. The sequence is that of Cytochrome c3, 26 kDa from Desulfomicrobium norvegicum (strain DSM 1741 / NCIMB 8310) (Desulfovibrio baculatus (strain Norway 4)).